The sequence spans 322 residues: ATP-dependent 6-phosphofructokinase (322 aa).

ATP contacts are provided by residues Gly-12, 73–74 (RF), and 103–106 (GDGT). Residue Asp-104 coordinates Mg(2+). 126-128 (TID) is a substrate binding site. The active-site Proton acceptor is Asp-128. Arg-155 lines the ADP pocket. Substrate contacts are provided by residues Arg-163 and 170 to 172 (MGR). Residues 186–188 (GSE), Lys-212, and 214–216 (KPS) contribute to the ADP site. Residues Glu-223, Arg-245, and 251 to 254 (HTQR) contribute to the substrate site.

Belongs to the phosphofructokinase type A (PFKA) family. ATP-dependent PFK group I subfamily. Prokaryotic clade 'B1' sub-subfamily. In terms of assembly, homotetramer. It depends on Mg(2+) as a cofactor.

The protein localises to the cytoplasm. The enzyme catalyses beta-D-fructose 6-phosphate + ATP = beta-D-fructose 1,6-bisphosphate + ADP + H(+). Its pathway is carbohydrate degradation; glycolysis; D-glyceraldehyde 3-phosphate and glycerone phosphate from D-glucose: step 3/4. Its activity is regulated as follows. Allosterically activated by ADP and other diphosphonucleosides, and allosterically inhibited by phosphoenolpyruvate. Its function is as follows. Catalyzes the phosphorylation of D-fructose 6-phosphate to fructose 1,6-bisphosphate by ATP, the first committing step of glycolysis. The protein is ATP-dependent 6-phosphofructokinase of Mesomycoplasma hyopneumoniae (strain 7448) (Mycoplasma hyopneumoniae).